The sequence spans 344 residues: MPNCFKFHTVIERHWQKPYPVLSFLLKPLSGLFAKIAAKRRTDFLSGKRQSEKLPVPVVVVGNIHAGGTGKTPIVAALVSGLQEKGVKVGIISRGYGRKSKAVHVLNAESRAEDAGDEPLLLFRKTGAPTAVGSSRAEAGRALLAAHPDIGLIVADDGLQHYALRRDVEIAVFPSADTGRTDLDLLPNGSLREPLLRLDSVDAVVVSGGKADALFRPSENMFHSRIEAGRIYRLNNPSEILDTGRLKNQTVVAVAGIAKPARFFDSLRNMGITVKRTVALPDHADISAADLPDADAVIITEKDAVKFSDGICTDNVWVLPVCAIIEPDLAAFVLERLEDVPKAV.

Position 65–72 (65–72 (HAGGTGKT)) interacts with ATP.

It belongs to the LpxK family.

It carries out the reaction a lipid A disaccharide + ATP = a lipid IVA + ADP + H(+). Its pathway is glycolipid biosynthesis; lipid IV(A) biosynthesis; lipid IV(A) from (3R)-3-hydroxytetradecanoyl-[acyl-carrier-protein] and UDP-N-acetyl-alpha-D-glucosamine: step 6/6. Its function is as follows. Transfers the gamma-phosphate of ATP to the 4'-position of a tetraacyldisaccharide 1-phosphate intermediate (termed DS-1-P) to form tetraacyldisaccharide 1,4'-bis-phosphate (lipid IVA). The protein is Tetraacyldisaccharide 4'-kinase of Neisseria meningitidis serogroup C / serotype 2a (strain ATCC 700532 / DSM 15464 / FAM18).